The following is a 142-amino-acid chain: Large ribosomal subunit protein uL13 (142 aa).

The protein belongs to the universal ribosomal protein uL13 family. As to quaternary structure, part of the 50S ribosomal subunit.

Its function is as follows. This protein is one of the early assembly proteins of the 50S ribosomal subunit, although it is not seen to bind rRNA by itself. It is important during the early stages of 50S assembly. The chain is Large ribosomal subunit protein uL13 from Pseudoalteromonas atlantica (strain T6c / ATCC BAA-1087).